Reading from the N-terminus, the 378-residue chain is Opsin Rh4 (378 aa).

The Extracellular segment spans residues 1–53; it reads MEPLCNASEPPLRPEARSSGNGDLQFLGWNVPPDQIQYIPEHWLTQLEPPASM. Asparagine 6 is a glycosylation site (N-linked (GlcNAc...) asparagine). Residues 54–78 traverse the membrane as a helical segment; sequence HYMLGVFYIFLFCASTVGNGMVIWI. Topologically, residues 79–90 are cytoplasmic; sequence FSTSKSLRTPSN. A helical membrane pass occupies residues 91-111; that stretch reads MFVLNLAVFDLIMCLKAPIFI. Over 112 to 127 the chain is Extracellular; the sequence is YNSFHRGFALGNTWCQ. An intrachain disulfide couples cysteine 126 to cysteine 203. Residues 128–148 form a helical membrane-spanning segment; it reads IFASIGSYSGIGAGMTNAAIG. Residues 149-167 are Cytoplasmic-facing; sequence YDRYNVITKPMNRNMTFTK. Residues 168-192 form a helical membrane-spanning segment; it reads AVIMNIIIWLYCTPWVVLPLTQFWD. The Extracellular segment spans residues 193-216; the sequence is RFVPEGYLTSCSFDYLSDNFDTRL. The chain crosses the membrane as a helical span at residues 217 to 244; that stretch reads FVGTIFFFSFVCPTLMILYYYSQIVGHV. Over 245–280 the chain is Cytoplasmic; the sequence is FSHEKALREQAKKMNVESLRSNVDKSKETAEIRIAK. The chain crosses the membrane as a helical span at residues 281-304; the sequence is AAITICFLFFVSWTPYGVMSLIGA. Over 305–312 the chain is Extracellular; sequence FGDKSLLT. Residues 313-337 form a helical membrane-spanning segment; the sequence is PGATMIPACTCKLVACIDPFVYAIS. Residue lysine 324 is modified to N6-(retinylidene)lysine. The Cytoplasmic segment spans residues 338 to 378; the sequence is HPRYRLELQKRCPWLGVNEKSGEISSAQSTTTQEQQQTTAA.

Belongs to the G-protein coupled receptor 1 family. Opsin subfamily. In terms of processing, phosphorylated on some or all of the serine and threonine residues present in the C-terminal region.

The protein localises to the membrane. In terms of biological role, visual pigments are the light-absorbing molecules that mediate vision. They consist of an apoprotein, opsin, covalently linked to cis-retinal. This is Opsin Rh4 (Rh4) from Drosophila melanogaster (Fruit fly).